The primary structure comprises 1238 residues: Chitin synthase 4 (1238 aa).

2 disordered regions span residues 1–93 and 132–190; these read MAEP…PERN and TVSS…RRQK. A compositionally biased stretch (basic and acidic residues) spans 14–34; the sequence is TRDKSHSPYRESPSRRLRDVE. N50 is a glycosylation site (N-linked (GlcNAc...) asparagine). Composition is skewed to polar residues over residues 71 to 80 and 133 to 142; these read SNPNPMSQSD and VSSGSTQQDT. The span at 175 to 190 shows a compositional bias: basic and acidic residues; it reads RKDTRNLTEEEKRRQK. The N-linked (GlcNAc...) asparagine glycan is linked to N180. 2 helical membrane-spanning segments follow: residues 200 to 220 and 235 to 255; these read IWNI…LQCF and VGLI…TFGF. N-linked (GlcNAc...) asparagine glycans are attached at residues N365, N404, and N426. A helical transmembrane segment spans residues 487–507; the sequence is VVLYVSLVFILAIVAAKFFLA. Disordered stretches follow at residues 548–570 and 582–606; these read PKIT…RGSM and YAVD…AKLL. A compositionally biased stretch (polar residues) spans 553–562; the sequence is PASTVTGSDG. 3 N-linked (GlcNAc...) asparagine glycosylation sites follow: N617, N903, and N1030. 3 helical membrane-spanning segments follow: residues 1062 to 1082, 1087 to 1107, and 1115 to 1135; these read IGTL…ILSI, VPVI…ILIV, and YILW…VLPA.

It belongs to the chitin synthase family. Class IV subfamily. Post-translationally, maximal activity requires trypsin activation, suggesting a zymogenic nature.

It localises to the cell membrane. It carries out the reaction [(1-&gt;4)-N-acetyl-beta-D-glucosaminyl](n) + UDP-N-acetyl-alpha-D-glucosamine = [(1-&gt;4)-N-acetyl-beta-D-glucosaminyl](n+1) + UDP + H(+). Its activity is regulated as follows. Activity is stimulated by Mg(2+), and is more inhibited by polyoxin D than by nikkomycin. In terms of biological role, polymerizes chitin, a structural polymer of the cell wall and septum, by transferring the sugar moiety of UDP-GlcNAc to the non-reducing end of the growing chitin polymer. CHS4 synthesizes a large amount of chitin and appears to play a role in the process of cell separation. CHS4 is particularly well suited for functioning at the higher temperatures associated with its poorly characterized saprophic environment and with human infection. This Exophiala dermatitidis (Black yeast-like fungus) protein is Chitin synthase 4.